The following is a 180-amino-acid chain: ATP-dependent protease subunit HslV (180 aa).

Residue threonine 7 is part of the active site. 3 residues coordinate Na(+): glycine 165, cysteine 168, and threonine 171.

The protein belongs to the peptidase T1B family. HslV subfamily. In terms of assembly, a double ring-shaped homohexamer of HslV is capped on each side by a ring-shaped HslU homohexamer. The assembly of the HslU/HslV complex is dependent on binding of ATP.

Its subcellular location is the cytoplasm. It catalyses the reaction ATP-dependent cleavage of peptide bonds with broad specificity.. With respect to regulation, allosterically activated by HslU binding. In terms of biological role, protease subunit of a proteasome-like degradation complex believed to be a general protein degrading machinery. In Bacillus anthracis (strain A0248), this protein is ATP-dependent protease subunit HslV.